Here is a 319-residue protein sequence, read N- to C-terminus: Probable metallo-hydrolase YqjP (319 aa).

Histidine 67, histidine 69, aspartate 71, histidine 72, histidine 165, aspartate 184, and histidine 231 together coordinate Zn(2+).

Belongs to the metallo-beta-lactamase superfamily. Requires Zn(2+) as cofactor.

The protein is Probable metallo-hydrolase YqjP (yqjP) of Bacillus subtilis (strain 168).